The chain runs to 321 residues: Mitochondrial thiamine pyrophosphate carrier 1 (321 aa).

6 helical membrane-spanning segments follow: residues 12–28 (GTRRQVVLAGGIAGLVS), 91–107 (LMYVCYGVIQFSAYRTT), 126–146 (FVAGATAGGLATASTYPLDLL), 184–200 (AAVGQIVPYMGLFFATY), 221–237 (AAGVIASVSSKTVMFPL), and 284–301 (GLTVSLFKAAPASAVTMW). Solcar repeat units follow at residues 12 to 110 (GTRR…TTQA), 120 to 206 (PPSA…LRPP), and 214 to 309 (PFGS…SLRL).

The protein belongs to the mitochondrial carrier (TC 2.A.29) family.

It localises to the mitochondrion inner membrane. Functionally, mitochondrial transporter that mediates uptake of thiamine pyrophosphate (ThPP) into mitochondria. The polypeptide is Mitochondrial thiamine pyrophosphate carrier 1 (tpc1) (Aspergillus niger (strain ATCC MYA-4892 / CBS 513.88 / FGSC A1513)).